A 224-amino-acid polypeptide reads, in one-letter code: tRNA (guanine-N(7)-)-methyltransferase (224 aa).

3 residues coordinate S-adenosyl-L-methionine: glutamate 57, aspartate 82, and aspartate 109. Aspartate 167 serves as a coordination point for substrate.

The protein belongs to the class I-like SAM-binding methyltransferase superfamily. TrmB family.

The enzyme catalyses guanosine(46) in tRNA + S-adenosyl-L-methionine = N(7)-methylguanosine(46) in tRNA + S-adenosyl-L-homocysteine. It functions in the pathway tRNA modification; N(7)-methylguanine-tRNA biosynthesis. Functionally, catalyzes the formation of N(7)-methylguanine at position 46 (m7G46) in tRNA. This is tRNA (guanine-N(7)-)-methyltransferase from Chloroflexus aggregans (strain MD-66 / DSM 9485).